The following is a 290-amino-acid chain: D-tagatose-1,6-bisphosphate aldolase subunit KbaY (290 aa).

D82 functions as the Proton donor in the catalytic mechanism. Residues H83 and H180 each coordinate Zn(2+). Position 181 (G181) interacts with dihydroxyacetone phosphate. H208 is a binding site for Zn(2+). Residues 209–211 and 230–233 contribute to the dihydroxyacetone phosphate site; these read GAS and NVAT.

It belongs to the class II fructose-bisphosphate aldolase family. TagBP aldolase KbaY subfamily. In terms of assembly, homotetramer. Forms a complex with KbaZ. Requires Zn(2+) as cofactor.

The catalysed reaction is D-tagatofuranose 1,6-bisphosphate = D-glyceraldehyde 3-phosphate + dihydroxyacetone phosphate. It functions in the pathway carbohydrate metabolism; D-tagatose 6-phosphate degradation; D-glyceraldehyde 3-phosphate and glycerone phosphate from D-tagatose 6-phosphate: step 2/2. In terms of biological role, catalytic subunit of the tagatose-1,6-bisphosphate aldolase KbaYZ, which catalyzes the reversible aldol condensation of dihydroxyacetone phosphate (DHAP or glycerone-phosphate) with glyceraldehyde 3-phosphate (G3P) to produce tagatose 1,6-bisphosphate (TBP). Requires KbaZ subunit for full activity and stability. The sequence is that of D-tagatose-1,6-bisphosphate aldolase subunit KbaY from Citrobacter koseri (strain ATCC BAA-895 / CDC 4225-83 / SGSC4696).